Reading from the N-terminus, the 205-residue chain is Thymidine kinase (205 aa).

ATP is bound by residues 9 to 16 (SAMNAGKS) and 87 to 90 (DESQ). The Proton acceptor role is filled by Glu88. Zn(2+) contacts are provided by Cys145, Cys147, Cys182, and His185.

It belongs to the thymidine kinase family. Homotetramer.

Its subcellular location is the cytoplasm. The enzyme catalyses thymidine + ATP = dTMP + ADP + H(+). This is Thymidine kinase from Salmonella paratyphi A (strain ATCC 9150 / SARB42).